The chain runs to 354 residues: Probable L-ascorbate-6-phosphate lactonase UlaG (354 aa).

It belongs to the UlaG family. A divalent metal cation is required as a cofactor.

Its subcellular location is the cytoplasm. The enzyme catalyses L-ascorbate 6-phosphate + H2O = 3-dehydro-L-gulonate 6-phosphate. The protein operates within cofactor degradation; L-ascorbate degradation; D-xylulose 5-phosphate from L-ascorbate: step 1/4. Probably catalyzes the hydrolysis of L-ascorbate-6-P into 3-keto-L-gulonate-6-P. Is essential for L-ascorbate utilization under anaerobic conditions. The chain is Probable L-ascorbate-6-phosphate lactonase UlaG from Escherichia coli O45:K1 (strain S88 / ExPEC).